We begin with the raw amino-acid sequence, 256 residues long: Thiazole synthase (256 aa).

The active-site Schiff-base intermediate with DXP is Lys-96. 1-deoxy-D-xylulose 5-phosphate-binding positions include Gly-157, 184–185, and 206–207; these read AG and NT.

The protein belongs to the ThiG family. Homotetramer. Forms heterodimers with either ThiH or ThiS.

The protein localises to the cytoplasm. It catalyses the reaction [ThiS sulfur-carrier protein]-C-terminal-Gly-aminoethanethioate + 2-iminoacetate + 1-deoxy-D-xylulose 5-phosphate = [ThiS sulfur-carrier protein]-C-terminal Gly-Gly + 2-[(2R,5Z)-2-carboxy-4-methylthiazol-5(2H)-ylidene]ethyl phosphate + 2 H2O + H(+). It participates in cofactor biosynthesis; thiamine diphosphate biosynthesis. Functionally, catalyzes the rearrangement of 1-deoxy-D-xylulose 5-phosphate (DXP) to produce the thiazole phosphate moiety of thiamine. Sulfur is provided by the thiocarboxylate moiety of the carrier protein ThiS. In vitro, sulfur can be provided by H(2)S. In Roseobacter denitrificans (strain ATCC 33942 / OCh 114) (Erythrobacter sp. (strain OCh 114)), this protein is Thiazole synthase.